We begin with the raw amino-acid sequence, 546 residues long: MLGQMMRNQLVIGSLVEHAARYHGAREVVSVETSGEVTRSCWKEVELRARKLASALGKMGLTPSDRCATIAWNNIRHLEVYYAVSGAGMVCHTINPRLFIEQITYVINHAEDKVVLLDDTFLPIIAEIHGSLPKVKAFVLMAHNNSNASAQMPGLIAYEDLIGQGDDNYIWPDVDENEASSLCYTSGTTGNPKGVLYSHRSTVLHSMTTAMPDTLNLSARDTILPVVPMFHVNAWGTPYSAAMVGAKLVLPGPALDGASLSKLIASEGVSIALGVPVVWQGLLAAQAGNGSKSQSLTRVVVGGSACPASMIREFNDIYGVEVIHAWGMTELSPFGTANTPLAHHVDLSPDEKLSLRKSQGRPPYGVELKIVNDEGIRLPEDGRSKGNLMARGHWVIKDYFHSDPGSTLSDGWFSTGDVATIDSDGFMTICDRAKDIIKSGGEWISTVELESIAIAHPHIVDAAVIAARHEKWDERPLLIAVKSPNSELTSGEVCNYFADKVARWQIPDAAIFVEELPRNGTGKILKNRLREKYGDILLRSSSSVCE.

A Mg(2+)-binding site is contributed by T185. The ATP site is built by W235 and T329. Position 330 (E330) interacts with Mg(2+). Positions 417, 434, 438, and 443 each coordinate ATP.

It belongs to the ATP-dependent AMP-binding enzyme family.

It is found in the cytoplasm. The catalysed reaction is a medium-chain fatty acid + ATP + CoA = a medium-chain fatty acyl-CoA + AMP + diphosphate. The protein operates within lipid metabolism; fatty acid metabolism. The polypeptide is Medium-chain-fatty-acid--CoA ligase (Ectopseudomonas oleovorans (Pseudomonas oleovorans)).